A 429-amino-acid chain; its full sequence is Adenylosuccinate synthetase (429 aa).

GTP is bound by residues 13–19 and 41–43; these read GDEGKGK and GHT. Asp-14 (proton acceptor) is an active-site residue. Mg(2+) contacts are provided by Asp-14 and Gly-41. IMP-binding positions include 14–17, 39–42, Thr-130, Arg-144, Gln-225, Thr-240, and Arg-304; these read DEGK and NAGH. His-42 serves as the catalytic Proton donor. 300-306 serves as a coordination point for substrate; it reads ATTGRRR. GTP is bound by residues Arg-306, 332–334, and 417–419; these read KLD and STG.

The protein belongs to the adenylosuccinate synthetase family. In terms of assembly, homodimer. It depends on Mg(2+) as a cofactor.

It localises to the cytoplasm. It catalyses the reaction IMP + L-aspartate + GTP = N(6)-(1,2-dicarboxyethyl)-AMP + GDP + phosphate + 2 H(+). The protein operates within purine metabolism; AMP biosynthesis via de novo pathway; AMP from IMP: step 1/2. In terms of biological role, plays an important role in the de novo pathway of purine nucleotide biosynthesis. Catalyzes the first committed step in the biosynthesis of AMP from IMP. This is Adenylosuccinate synthetase from Buchnera aphidicola subsp. Baizongia pistaciae (strain Bp).